Consider the following 381-residue polypeptide: Complement decay-accelerating factor (381 aa).

Residues 1 to 34 (MTVARPSVPAALPLLGELPRLLLLVLLCLPAVWG) form the signal peptide. 4 Sushi domains span residues 35–96 (DCGL…FCNR), 96–160 (RSCE…FCKK), 161–222 (KSCP…ECRE), and 223–285 (IYCP…ECRG). 2 disulfide bridges follow: Cys-36–Cys-81 and Cys-65–Cys-94. Residue Asn-95 is glycosylated (N-linked (GlcNAc...) asparagine). Disulfide bonds link Cys-98–Cys-145, Cys-129–Cys-158, Cys-163–Cys-204, Cys-190–Cys-220, Cys-225–Cys-267, and Cys-253–Cys-283. The segment at 277 to 354 (SGPPPECRGK…PNKGSGTTSG (78 aa)) is disordered. Positions 287–309 (SLTSKVPPTVQKPTTVNVPTTEV) are enriched in polar residues. Residues 310-328 (SPTSQKTTTKTTTPNAQAT) show a composition bias toward low complexity. Ser-353 is lipidated: GPI-anchor amidated serine. The propeptide at 354–381 (GTTRLLSGHTCFTLTGLLGTLVTMGLLT) is removed in mature form.

This sequence belongs to the receptors of complement activation (RCA) family. In terms of assembly, monomer (major form) and non-disulfide-linked, covalent homodimer (minor form). Interacts with ADGRE5. As to quaternary structure, (Microbial infection) Interacts with coxsackievirus A21, coxsackieviruses B1, B3 and B5 capsid proteins. (Microbial infection) Interacts with human enterovirus 70 and D68 capsid proteins. In terms of assembly, (Microbial infection) Interacts with human echoviruses 6, 7, 11, 12, 20 and 21 capsid proteins. Post-translationally, the Ser/Thr-rich domain is heavily O-glycosylated. As to expression, expressed on the plasma membranes of all cell types that are in intimate contact with plasma complement proteins. It is also found on the surfaces of epithelial cells lining extracellular compartments, and variants of the molecule are present in body fluids and in extracellular matrix.

Its subcellular location is the cell membrane. The protein resides in the secreted. In terms of biological role, this protein recognizes C4b and C3b fragments that condense with cell-surface hydroxyl or amino groups when nascent C4b and C3b are locally generated during C4 and c3 activation. Interaction of daf with cell-associated C4b and C3b polypeptides interferes with their ability to catalyze the conversion of C2 and factor B to enzymatically active C2a and Bb and thereby prevents the formation of C4b2a and C3bBb, the amplification convertases of the complement cascade. Inhibits complement activation by destabilizing and preventing the formation of C3 and C5 convertases, which prevents complement damage. Its function is as follows. (Microbial infection) Acts as a receptor for Coxsackievirus A21, coxsackieviruses B1, B3 and B5. Functionally, (Microbial infection) Acts as a receptor for Human enterovirus 70 and D68. (Microbial infection) Acts as a receptor for Human echoviruses 6, 7, 11, 12, 20 and 21. The sequence is that of Complement decay-accelerating factor (CD55) from Homo sapiens (Human).